We begin with the raw amino-acid sequence, 88 residues long: Outer membrane protein H.8 (88 aa).

The first 17 residues, 1–17, serve as a signal peptide directing secretion; it reads MKKSLFAAALLSLALAA. Cys18 carries the N-palmitoyl cysteine lipid modification. Cys18 carries S-diacylglycerol cysteine lipidation. A run of 13 repeats spans residues 23–27, 28–32, 33–37, 38–42, 43–47, 48–52, 53–57, 58–62, 63–67, 68–72, 73–77, 78–82, and 83–87. Positions 23–87 are 13 X 5 AA tandem repeats of [AS]-[AT]-E-A-[PAS]; sequence AAEAPAAEAS…AAEAPAAEAA (65 aa). The disordered stretch occupies residues 23 to 88; it reads AAEAPAAEAS…AEAPAAEAAK (66 aa). Low complexity predominate over residues 25-88; the sequence is EAPAAEASST…AEAPAAEAAK (64 aa).

The protein resides in the cell outer membrane. The polypeptide is Outer membrane protein H.8 (Neisseria gonorrhoeae (strain ATCC 700825 / FA 1090)).